A 482-amino-acid chain; its full sequence is Abscisic acid 8'-hydroxylase 2 (482 aa).

The chain crosses the membrane as a helical span at residues 20–40; that stretch reads PALITLTIVVVVVVLLFKWWL. A heme-binding site is contributed by Cys431.

Belongs to the cytochrome P450 family. The cofactor is heme. Mainly expressed in dry seeds. Lower expression in rosette leaves, flowers, siliques and stems. Not expressed in roots. Expressed in both endosperm and vascular tissues of embryo during the seed development and in cortex and endodermis in germinating embryo.

It is found in the membrane. It catalyses the reaction 2-cis-(+)-abscisate + reduced [NADPH--hemoprotein reductase] + O2 = (+)-8'-hydroxyabscisate + oxidized [NADPH--hemoprotein reductase] + H2O + H(+). Its pathway is plant hormone degradation; abscisic acid degradation. In terms of biological role, involved in the oxidative degradation of abscisic acid, but not in the isomerization of the produced 8'-hydroxyabscisic acid (8'-OH-ABA) to (-)-phaseic acid (PA). Involved in the control of seed dormancy and germination. This chain is Abscisic acid 8'-hydroxylase 2 (CYP707A2), found in Arabidopsis thaliana (Mouse-ear cress).